Consider the following 33-residue polypeptide: Protamine TP17 (33 aa).

Residues M1 to R33 are disordered.

Testis.

The protein localises to the nucleus. It localises to the chromosome. Protamines substitute for histones in the chromatin of sperm during the haploid phase of spermatogenesis. They compact sperm DNA into a highly condensed, stable and inactive complex. The polypeptide is Protamine TP17 (Oncorhynchus mykiss (Rainbow trout)).